The chain runs to 101 residues: Small ribosomal subunit protein uS14A (101 aa).

2 disordered regions span residues Met1 to Tyr20 and Thr28 to Gly72. 2 stretches are compositionally biased toward basic and acidic residues: residues Glu38 to Arg53 and Arg61 to Pro70.

Belongs to the universal ribosomal protein uS14 family. In terms of assembly, part of the 30S ribosomal subunit. Contacts proteins S3 and S10.

In terms of biological role, binds 16S rRNA, required for the assembly of 30S particles and may also be responsible for determining the conformation of the 16S rRNA at the A site. The sequence is that of Small ribosomal subunit protein uS14A from Streptomyces avermitilis (strain ATCC 31267 / DSM 46492 / JCM 5070 / NBRC 14893 / NCIMB 12804 / NRRL 8165 / MA-4680).